The following is a 508-amino-acid chain: N-acetyl-D-hexosamine oxidase (508 aa).

Positions 26–203 constitute an FAD-binding PCMH-type domain; the sequence is TDAQAAGRIA…TAYTFARLPE (178 aa). Residues 64–123 constitute a cross-link (6-(S-cysteinyl)-8alpha-(pros-histidyl)-FAD (His-Cys)); the sequence is HCYEDFVSNNPDGAIVDLSLLNAPEVRADGTVRIPAGTQNWNGYLELYKRHNLTLPGGSC.

The protein belongs to the oxygen-dependent FAD-linked oxidoreductase family. Requires FAD as cofactor.

The catalysed reaction is N-acetyl-D-glucosamine + O2 + H2O = N-acetyl-D-glucosaminate + H2O2 + H(+). The enzyme catalyses N-acetyl-D-galactosamine + O2 + H2O = N-acetyl-D-galactosaminate + H2O2 + H(+). It carries out the reaction N-acetyl-D-glucosamine + O2 = N-acetyl-D-glucosamino-1,5-lactone + H2O2. It catalyses the reaction N-acetyl-D-galactosamine + O2 = N-acetyl-D-galactosamino-1,5-lactone + H2O2. Its function is as follows. Catalyzes the oxidation of a range of monosaccharides in vitro, displaying the highest activity with N-acetylglucosamine (GlcNAc) and N-acetylgalactosamine (GalNAc), with a reduction of O2 to H2O2. Acts upon the C1 carbon of the GlcNAc or GalNAc molecule, producing the corresponding lactone, which can spontaneously hydrolyze. Its biological function is unclear, but its main function might be connected to extracellular production of hydrogen peroxide to compete with other organisms through oxidative stress, or support the action of peroxidases and peroxygenases. The polypeptide is N-acetyl-D-hexosamine oxidase (Ralstonia solanacearum (strain UW551)).